Consider the following 496-residue polypeptide: UDP-glycosyltransferase 73C2 (496 aa).

UDP-alpha-D-glucose contacts are provided by residues Ser297, 357–359, 374–382, and 396–399; these read SPQ, HCGWNSTLE, and FGDQ.

The protein belongs to the UDP-glycosyltransferase family.

The sequence is that of UDP-glycosyltransferase 73C2 (UGT73C2) from Arabidopsis thaliana (Mouse-ear cress).